An 87-amino-acid chain; its full sequence is Mitochondrial import inner membrane translocase subunit TIM9 (87 aa).

The short motif at 35–59 is the Twin CX3C motif element; it reads CFSDCVNDFTSSKLTSKEQTCIMRC. 2 cysteine pairs are disulfide-bonded: cysteine 35–cysteine 59 and cysteine 39–cysteine 55.

It belongs to the small Tim family. In terms of assembly, heterohexamer; composed of 3 copies of TIM9 and 3 copies of TIM10, named soluble 70 kDa complex. Associates with the TIM22 complex, whose core is composed of TIM22 and TIM54. Interacts with the transmembrane regions of multi-pass transmembrane proteins in transit.

It localises to the mitochondrion inner membrane. Its function is as follows. Mitochondrial intermembrane chaperone that participates in the import and insertion of multi-pass transmembrane proteins into the mitochondrial inner membrane. Also required for the transfer of beta-barrel precursors from the TOM complex to the sorting and assembly machinery (SAM complex) of the outer membrane. Acts as a chaperone-like protein that protects the hydrophobic precursors from aggregation and guide them through the mitochondrial intermembrane space. This chain is Mitochondrial import inner membrane translocase subunit TIM9 (TIM9), found in Eremothecium gossypii (strain ATCC 10895 / CBS 109.51 / FGSC 9923 / NRRL Y-1056) (Yeast).